The primary structure comprises 285 residues: HTH-type transcriptional regulator MurR (285 aa).

Positions 1–77 (MLYLTKIRNA…MALIGEYSAS (77 aa)) constitute an HTH rpiR-type domain. A DNA-binding region (H-T-H motif) is located at residues 37-56 (SRKMAKLLGISQSSIVKFAQ). One can recognise an SIS domain in the interval 128-268 (IIEAISKAPF…FVGLVQLNDV (141 aa)).

In terms of assembly, homotetramer.

Its pathway is amino-sugar metabolism; N-acetylmuramate degradation [regulation]. Functionally, represses the expression of the murPQ operon involved in the uptake and degradation of N-acetylmuramic acid (MurNAc). Binds to two adjacent inverted repeats within the operator region. MurNAc 6-phosphate, the substrate of MurQ, is the specific inducer that weakens binding of MurR to the operator. This is HTH-type transcriptional regulator MurR from Escherichia coli O17:K52:H18 (strain UMN026 / ExPEC).